A 399-amino-acid chain; its full sequence is S-adenosylmethionine synthase (399 aa).

Residue His-17 participates in ATP binding. Asp-19 is a Mg(2+) binding site. Glu-45 is a binding site for K(+). 2 residues coordinate L-methionine: Glu-58 and Gln-101. The flexible loop stretch occupies residues 101–111; the sequence is QSADIAMGVDQ. ATP contacts are provided by residues 177–179, 244–245, Asp-253, 259–260, Ala-276, and Lys-280; these read DGK, RF, and RK. Residue Asp-253 participates in L-methionine binding. An L-methionine-binding site is contributed by Lys-284.

This sequence belongs to the AdoMet synthase family. In terms of assembly, homotetramer; dimer of dimers. It depends on Mg(2+) as a cofactor. The cofactor is K(+).

The protein resides in the cytoplasm. It catalyses the reaction L-methionine + ATP + H2O = S-adenosyl-L-methionine + phosphate + diphosphate. It participates in amino-acid biosynthesis; S-adenosyl-L-methionine biosynthesis; S-adenosyl-L-methionine from L-methionine: step 1/1. In terms of biological role, catalyzes the formation of S-adenosylmethionine (AdoMet) from methionine and ATP. The overall synthetic reaction is composed of two sequential steps, AdoMet formation and the subsequent tripolyphosphate hydrolysis which occurs prior to release of AdoMet from the enzyme. In Bacillus cereus (strain ATCC 10987 / NRS 248), this protein is S-adenosylmethionine synthase.